The primary structure comprises 166 residues: Small ribosomal subunit protein uS5 (166 aa).

An S5 DRBM domain is found at 11–74 (LQEKLIAVNR…EKARRNMMNV (64 aa)).

The protein belongs to the universal ribosomal protein uS5 family. Part of the 30S ribosomal subunit. Contacts proteins S4 and S8.

In terms of biological role, with S4 and S12 plays an important role in translational accuracy. Functionally, located at the back of the 30S subunit body where it stabilizes the conformation of the head with respect to the body. The sequence is that of Small ribosomal subunit protein uS5 from Sodalis glossinidius (strain morsitans).